A 361-amino-acid chain; its full sequence is RNA 3'-terminal phosphate cyclase (361 aa).

ATP-binding residues include Q105, P132, Y295, D298, Q299, and H321. The Tele-AMP-histidine intermediate role is filled by H321.

This sequence belongs to the RNA 3'-terminal cyclase family. Type 1 subfamily.

The protein resides in the nucleus. It localises to the nucleoplasm. It carries out the reaction a 3'-end 3'-phospho-ribonucleotide-RNA + ATP = a 3'-end 2',3'-cyclophospho-ribonucleotide-RNA + AMP + diphosphate. In terms of biological role, catalyzes the conversion of 3'-phosphate to a 2',3'-cyclic phosphodiester at the end of RNA. The mechanism of action of the enzyme occurs in 3 steps: (A) adenylation of the enzyme by ATP; (B) transfer of adenylate to an RNA-N3'P to produce RNA-N3'PP5'A; (C) and attack of the adjacent 2'-hydroxyl on the 3'-phosphorus in the diester linkage to produce the cyclic end product. Likely functions in some aspects of cellular RNA processing. Function plays an important role in a RNA repair and splicing pathway which controls axon regeneration in response to peripheral (PNS) and central nervous system (CNS) injury. In response to axotomy, negatively regulates splicing of Xbp1 which in turn activates downstream effectors which inhibit axon regeneration, including down-regulating the microtubule regulators ringer and futsch. In Drosophila melanogaster (Fruit fly), this protein is RNA 3'-terminal phosphate cyclase.